A 535-amino-acid chain; its full sequence is Cytochrome P450 monooxygenase atE (535 aa).

C455 is a binding site for heme.

Belongs to the cytochrome P450 family. The cofactor is heme.

The catalysed reaction is 3-methylcatechol + AH2 + O2 = 3-methylbenzene-1,2,4-triol + A + H2O. It participates in secondary metabolite biosynthesis. Cytochrome P450 monooxygenase; part of the gene cluster that mediates the biosynthesis of terreic acid, a quinone epoxide inhibitor of Bruton's tyrosine kinase. The first step of the pathway is the synthesis of 6-methylsalicylic acid (6-MSA) by the 6-methylsalicylic acid synthase atX. In the biosynthesis of 6-MSA, atX utilizes one acetyl-CoA and three malonyl-CoAs as its substrates and catalyzes a series of programmed reactions including Claisen condensation, reduction, aldol cyclization, and the hydrolytic cleavage that yields 6-MSA. The 6-methylsalicylate 1-monooxygenase atA then catalyzes the decarboxylative hydroxylation of 6-MSA to 3-methylcatechol. The next step is the conversion of 3-methylcatechol to 3-methyl-1,2,4-benzenetriol by cytochrome P450 monooxygenase atE, which is enhanced by cytochrome P450 monooxygenase atG. Then, the epoxidase atD catalyzes the epoxidation and hydroxyl oxidation of 3-methyl-1,2,4-benzenetriol to terremutin. Lastly, GMC oxidoreductase atC oxidizes terremutin to terreic acid. This chain is Cytochrome P450 monooxygenase atE, found in Aspergillus terreus (strain NIH 2624 / FGSC A1156).